Reading from the N-terminus, the 371-residue chain is N-acetyldiaminopimelate deacetylase (371 aa).

D68 is an active-site residue. The active-site Proton acceptor is E127.

It belongs to the peptidase M20A family. N-acetyldiaminopimelate deacetylase subfamily.

The catalysed reaction is N-acetyl-(2S,6S)-2,6-diaminopimelate + H2O = (2S,6S)-2,6-diaminopimelate + acetate. It functions in the pathway amino-acid biosynthesis; L-lysine biosynthesis via DAP pathway; LL-2,6-diaminopimelate from (S)-tetrahydrodipicolinate (acetylase route): step 3/3. Functionally, catalyzes the conversion of N-acetyl-diaminopimelate to diaminopimelate and acetate. The chain is N-acetyldiaminopimelate deacetylase from Listeria monocytogenes serotype 4a (strain HCC23).